Consider the following 338-residue polypeptide: Solute carrier family 35 member G5 (338 aa).

Residues 1 to 21 (MAGSHPYFNLPDSTHPSPPSA) are disordered. Helical transmembrane passes span 37–57 (TNGL…VGPL), 67–87 (LPSL…ALPL), 105–125 (CFCA…VQVV), 160–180 (CGLL…LWTL), 190–210 (ALGY…LLVY), 221–241 (TVAF…LFVL), 250–270 (LLSW…FTCV), 281–301 (LVCA…YYVL), and 305–325 (VAPF…IITA). The EamA 1 domain maps to 49–174 (LPAGFVGPLS…SILGLIIIVG (126 aa)). Residues 272–325 (YAVTKAHPALVCAVLHSEVVVALILQYYVLHETVAPFDITGAGIVLGSIAIITA) form the EamA 2 domain.

The protein belongs to the SLC35G solute transporter family.

Its subcellular location is the membrane. The chain is Solute carrier family 35 member G5 (SLC35G5) from Pan paniscus (Pygmy chimpanzee).